Here is a 338-residue protein sequence, read N- to C-terminus: MLSALARPAGAALRRSFSTSAQNNAKVAVLGASGGIGQPLSLLLKNSPLVSRLTLYDIAHTPGVAADLSHIETRAAVKGYLGPEQLPDCLKGCDVVVIPAGVPRKPGMTRDDLFNTNASIVATLTAACAQHCPEAMICIISNPVNSTIPITAEVFKKHGVYNPNKIFGVTTLDIVRANTFIAELKGLDPARVNVPVIGGHAGKTIIPLISQCTPKVDLPQDQLTAVTGRIQEAGTEVVKAKAGAGSATLSMAYAGARFVFSLVDAINGKEGVVECSFVKSQETDCPYFSTPLLLGKKGIEKNLGIGKISPFEEKMIAEALPELKASIKKGEEFVKNMK.

Residues 1-24 (MLSALARPAGAALRRSFSTSAQNN) constitute a mitochondrion transit peptide. Residues 31–37 (GASGGIG) and D57 each bind NAD(+). A glycan (O-linked (GalNAc...) serine) is linked at S33. N6-acetyllysine; alternate is present on residues K78 and K91. An N6-succinyllysine; alternate mark is found at K78 and K91. Residues R104 and R110 each contribute to the substrate site. Residues N117 and 140-142 (ISN) each bind NAD(+). N142 serves as a coordination point for substrate. Residue K165 is modified to N6-acetyllysine. The active-site Proton relay is D173. R176 contributes to the substrate binding site. K185 carries the post-translational modification N6-acetyllysine; alternate. K185 bears the N6-succinyllysine; alternate mark. Residue H200 is the Proton acceptor of the active site. K203 bears the N6-succinyllysine mark. N6-acetyllysine; alternate occurs at positions 215 and 239. 2 positions are modified to N6-succinyllysine; alternate: K215 and K239. Position 239 is an N6-malonyllysine; alternate (K239). Position 246 is a phosphoserine (S246). M251 lines the NAD(+) pocket. At K269 the chain carries N6-succinyllysine. An N6-acetyllysine; alternate mark is found at K296, K301, K307, K314, and K324. Residues K296, K301, K307, K314, and K324 each carry the N6-succinyllysine; alternate modification. K307 carries the N6-malonyllysine; alternate modification. S326 is modified (phosphoserine). Residues K328, K329, and K335 each carry the N6-acetyllysine; alternate modification. K328 carries the N6-succinyllysine; alternate modification. K329 bears the N6-malonyllysine; alternate mark. An N6-succinyllysine; alternate modification is found at K335.

The protein belongs to the LDH/MDH superfamily. MDH type 1 family. Homodimer. Post-translationally, acetylation is enhanced after treatment either with trichostin A (TSA) or with nicotinamide (NAM) with the appearance of tri- and tetraacetylations. Glucose also increases acetylation. In terms of tissue distribution, ubiquitously expressed. Highly expressed in skeletal muscle and heart. Also expressed in liver, ileum, colon, kidney and adipose tissue, and at very low levels in lung, pancreas, stomach and spleen.

It localises to the mitochondrion matrix. The catalysed reaction is (S)-malate + NAD(+) = oxaloacetate + NADH + H(+). Enzyme activity is enhanced by acetylation. This chain is Malate dehydrogenase, mitochondrial, found in Felis catus (Cat).